Reading from the N-terminus, the 769-residue chain is Metal transporter CNNM4 (769 aa).

The Extracellular portion of the chain corresponds to 1–175 (MAASAGCYYG…RLRVLEEEKP (175 aa)). N-linked (GlcNAc...) asparagine glycans are attached at residues Asn99 and Asn115. One can recognise a CNNM transmembrane domain in the interval 175–355 (PLLPIWLQAC…EPYSGIVREE (181 aa)). Residues 176 to 196 (LLPIWLQACIIAVLLTLSGIF) traverse the membrane as a helical segment. Residues 197–237 (SGLNLGLMALDPMELRVVQRCGTEKEKRYASKIEPVRRKGN) are Cytoplasmic-facing. Positions 238-258 (YLLCSLLLGNVLVNTTLTALL) form an intramembrane region, helical. The Cytoplasmic segment spans residues 259 to 261 (DEL). The chain crosses the membrane as a helical span at residues 262–282 (IGSGLAAVLASTTGIVVLGEI). The Extracellular segment spans residues 283–292 (VPQALCSRHG). A helical transmembrane segment spans residues 293 to 313 (LAVGANTLWLTRIFMLLTFPV). Residues 314–769 (AYPVSRLLDC…SQHSLQHNAV (456 aa)) are Cytoplasmic-facing. CBS domains are found at residues 374-435 (MTKV…CTPL) and 442-508 (YSHP…ILDE). The disordered stretch occupies residues 717–769 (LMSSRLDSSPQSPEGGTRKPDSTLSERSEVLEDETTSLLNQRNSQHSLQHNAV). Positions 721–730 (RLDSSPQSPE) are enriched in polar residues. Residues 732–746 (GTRKPDSTLSERSEV) are compositionally biased toward basic and acidic residues. Residues 752–769 (TSLLNQRNSQHSLQHNAV) are compositionally biased toward polar residues.

The protein belongs to the ACDP family.

The protein localises to the cell membrane. Its function is as follows. Probable metal transporter. This chain is Metal transporter CNNM4 (cnnm4), found in Xenopus tropicalis (Western clawed frog).